The following is a 239-amino-acid chain: tRNA (guanine-N(7)-)-methyltransferase (239 aa).

Residues E69, E94, D121, and D144 each coordinate S-adenosyl-L-methionine. Residue D144 is part of the active site. K148 contacts substrate. The interaction with RNA stretch occupies residues 150–155; that stretch reads RHNKRR. Substrate contacts are provided by residues D180 and 217–220; that span reads TKFE.

It belongs to the class I-like SAM-binding methyltransferase superfamily. TrmB family. Monomer.

It carries out the reaction guanosine(46) in tRNA + S-adenosyl-L-methionine = N(7)-methylguanosine(46) in tRNA + S-adenosyl-L-homocysteine. The protein operates within tRNA modification; N(7)-methylguanine-tRNA biosynthesis. In terms of biological role, catalyzes the formation of N(7)-methylguanine at position 46 (m7G46) in tRNA. The protein is tRNA (guanine-N(7)-)-methyltransferase of Shigella boydii serotype 4 (strain Sb227).